Consider the following 61-residue polypeptide: Large ribosomal subunit protein uL29 (61 aa).

Belongs to the universal ribosomal protein uL29 family.

The polypeptide is Large ribosomal subunit protein uL29 (Xanthomonas campestris pv. campestris (strain 8004)).